The sequence spans 179 residues: Large ribosomal subunit protein uL5 (179 aa).

This sequence belongs to the universal ribosomal protein uL5 family. As to quaternary structure, part of the 50S ribosomal subunit; part of the 5S rRNA/L5/L18/L25 subcomplex. Contacts the 5S rRNA and the P site tRNA. Forms a bridge to the 30S subunit in the 70S ribosome.

Functionally, this is one of the proteins that bind and probably mediate the attachment of the 5S RNA into the large ribosomal subunit, where it forms part of the central protuberance. In the 70S ribosome it contacts protein S13 of the 30S subunit (bridge B1b), connecting the 2 subunits; this bridge is implicated in subunit movement. Contacts the P site tRNA; the 5S rRNA and some of its associated proteins might help stabilize positioning of ribosome-bound tRNAs. This is Large ribosomal subunit protein uL5 from Pseudomonas fluorescens (strain SBW25).